Consider the following 144-residue polypeptide: Large ribosomal subunit protein uL15 (144 aa).

The segment covering 1–12 has biased composition (polar residues); sequence MRLNTLSPSLGS. The segment at 1–51 is disordered; it reads MRLNTLSPSLGSRKNHKRLGRGIGSGFGKTAGRGHKGQKSRSGGHVNRGFE. A compositionally biased stretch (gly residues) spans 21–31; sequence RGIGSGFGKTA.

This sequence belongs to the universal ribosomal protein uL15 family. Part of the 50S ribosomal subunit.

In terms of biological role, binds to the 23S rRNA. In Buchnera aphidicola subsp. Schizaphis graminum (strain Sg), this protein is Large ribosomal subunit protein uL15.